Here is an 88-residue protein sequence, read N- to C-terminus: Synaptonemal complex central element protein 3 (88 aa).

Residues 7-75 (EERNYDNMLK…FVNCKEEMEK (69 aa)) are a coiled coil.

Homodimer. Can form higher-order homooligomers. Interacts with SYCP1 (via tetrameric core); the interaction remodels SYCP1 homotetramers to 2:1 heterotrimers with SYCE3. SYCP1/SYCE3 heterotrimers form lattice assemblies as part of the mature synaptonemal complex via both lateral and head-to-head interactions. Interacts with the SYCE1-SIX6OS1 complex; the interaction recruits the SYCE1-SIX6OS1 complex to the central element of the synaptonemal complex. Interacts with the SYCE2-TEX12 complex; the interaction promotes fibrous assembly of SYCE2-TEX12 as part of the synaptonemal complex central element. Interacts with SYCE1. Interacts with SYCE2. Interacts with proteasome subunit PSMA8; to participate in meiosis progression during spermatogenesis. Interacts with SPO16.

It is found in the nucleus. The protein resides in the chromosome. Its function is as follows. Major component of the transverse central element of synaptonemal complexes (SCS), formed between homologous chromosomes during meiotic prophase. Required for the assembly of the central element of the synaptonemal complex during meiosis, via remodeling of SYCP1 lattice structures and promoting recruitment of SYCE2-TEX12 and SYCE1-SIX60S1 complexes. Required for chromosome loading of the central element-specific SCS proteins, and for initiating synapsis between homologous chromosomes. Chromosome loading appears to require SYCP1. Required for fertility and normal testis development. This Homo sapiens (Human) protein is Synaptonemal complex central element protein 3.